A 202-amino-acid chain; its full sequence is Small ribosomal subunit protein uS4c (202 aa).

One can recognise an S4 RNA-binding domain in the interval 90-158; it reads MRSDNVIFRL…ISKNIELYQK (69 aa).

It belongs to the universal ribosomal protein uS4 family. In terms of assembly, part of the 30S ribosomal subunit. Contacts protein S5. The interaction surface between S4 and S5 is involved in control of translational fidelity.

The protein localises to the plastid. It is found in the chloroplast. Its function is as follows. One of the primary rRNA binding proteins, it binds directly to 16S rRNA where it nucleates assembly of the body of the 30S subunit. In terms of biological role, with S5 and S12 plays an important role in translational accuracy. This is Small ribosomal subunit protein uS4c (rps4) from Exsertotheca crispa (Moss).